Consider the following 280-residue polypeptide: Late embryogenesis abundant protein M17 (280 aa).

A signal peptide spans 1-22; the sequence is MGNLKSLVLLALLFSFSVAVFA. N23 carries an N-linked (GlcNAc...) asparagine glycan. 2 tandem repeats follow at residues 76–97 and 131–152. The 4 X 22 AA repeats, Cys-rich stretch occupies residues 76–262; it reads GGCRWGCCGG…RGRCRYCCRS (187 aa). The tract at residues 163–184 is disordered; sequence VEPNDVEPQQGGRGGGGGGGGG. Residues 173 to 184 are compositionally biased toward gly residues; it reads GGRGGGGGGGGG. The stretch at 186–207 is repeat 3; sequence GGCRWGCCGGWWRGRCRYCCRS. Residues 218–239 form a disordered region; it reads VEPNDVEPQQGGRGGGGGGGGG. Gly residues predominate over residues 228-239; sequence GGRGGGGGGGGG. Copy 4 of the repeat occupies 241–262; sequence GGCRWGCCGGWWRGRCRYCCRS.

Functionally, may be involved in the acquisition of desiccation tolerance during late phase of embryogenesis. This is Late embryogenesis abundant protein M17 from Arabidopsis thaliana (Mouse-ear cress).